A 414-amino-acid chain; its full sequence is Nuclear pore complex-interacting protein family member B7 (414 aa).

Residues 1–18 form the signal peptide; that stretch reads MRLRFWLLIWLLLGFISH. N-linked (GlcNAc...) asparagine glycosylation occurs at N111. Disordered stretches follow at residues 242-262 and 335-402; these read RMGRQPPPPTQQHSITDNSLS and SPLP…LRTR. Positions 252 to 262 are enriched in polar residues; the sequence is QQHSITDNSLS. A compositionally biased stretch (basic and acidic residues) spans 356 to 384; it reads EVEKPPKPKRWRVDEVEQSPKPKRQREAE. Residues 390 to 402 show a composition bias toward basic residues; that stretch reads KPKRRRLSKLRTR.

The protein belongs to the NPIP family.

The protein localises to the secreted. This Homo sapiens (Human) protein is Nuclear pore complex-interacting protein family member B7 (NPIPB7).